We begin with the raw amino-acid sequence, 632 residues long: Probable potassium transport system protein Kup (632 aa).

The next 12 helical transmembrane spans lie at 17 to 37 (LFYL…TSPL), 60 to 80 (LISL…VLFL), 106 to 126 (TAIL…DAMI), 146 to 166 (LSEY…VVQS), 175 to 195 (FFGP…ISHI), 210 to 230 (AVSF…AVFL), 254 to 274 (WFLL…ALVL), 292 to 312 (ALLP…QAVI), 344 to 364 (IFVP…VLSF), 370 to 390 (LATA…IMAF), 401 to 421 (LPVA…FLGA), and 426 to 446 (IHDG…IMWT).

Belongs to the HAK/KUP transporter (TC 2.A.72) family.

The protein localises to the cell inner membrane. It catalyses the reaction K(+)(in) + H(+)(in) = K(+)(out) + H(+)(out). In terms of biological role, transport of potassium into the cell. Likely operates as a K(+):H(+) symporter. The polypeptide is Probable potassium transport system protein Kup (Rhizobium rhizogenes (Agrobacterium rhizogenes)).